We begin with the raw amino-acid sequence, 352 residues long: tRNA pseudouridine synthase D (352 aa).

The active-site Nucleophile is D78. A TRUD domain is found at G153–L299.

It belongs to the pseudouridine synthase TruD family.

The catalysed reaction is uridine(13) in tRNA = pseudouridine(13) in tRNA. Responsible for synthesis of pseudouridine from uracil-13 in transfer RNAs. In Aeromonas salmonicida (strain A449), this protein is tRNA pseudouridine synthase D.